The sequence spans 180 residues: Cytidylate kinase (180 aa).

7-15 (GLPGSGTTT) contacts ATP.

Belongs to the cytidylate kinase family. Type 2 subfamily.

The protein resides in the cytoplasm. It carries out the reaction CMP + ATP = CDP + ADP. The enzyme catalyses dCMP + ATP = dCDP + ADP. This Methanosarcina barkeri (strain Fusaro / DSM 804) protein is Cytidylate kinase.